The chain runs to 278 residues: Cysteine-rich repeat secretory protein 18 (278 aa).

A signal peptide spans 1–32 (MYSSSSVSKRFVLVPIVVVVTTQLLLVRNVSS). Gnk2-homologous domains are found at residues 39 to 147 (YLHH…SLDT) and 160 to 267 (PSAK…LYPF).

It belongs to the cysteine-rich repeat secretory protein family.

It localises to the secreted. This is Cysteine-rich repeat secretory protein 18 (CRRSP18) from Arabidopsis thaliana (Mouse-ear cress).